Here is a 184-residue protein sequence, read N- to C-terminus: TRAF-interacting protein with FHA domain-containing protein A (184 aa).

A Phosphothreonine; by ALPK1 modification is found at threonine 9. The FHA domain maps to 47–103 (VKFGRNSNICHYTFQDKQVSRVQFSLQLFKKFNSSVLSFEIKNMSKKTNLIVDSREL). The tract at residues 165 to 184 (TYSLCSSQSSSPTEMDENES) is disordered. The span at 167–177 (SLCSSQSSSPT) shows a compositional bias: polar residues.

It belongs to the TIFA family. As to quaternary structure, homooligomer; homooligomerizes following phosphorylation at Thr-9. Interacts with IRAK1, TRAF2 and TRAF6. Interacts with TIFAB; binding to TIFAB inhibits TRAF6 activation, possibly by inducing a conformational change in TIFA. Interacts with ZCCHC11; binding to ZCCHC11 suppresses the TRAF6-dependent activation of NF-kappa-B. Post-translationally, phosphorylated at Thr-9 following detection of ADP-D-glycero-beta-D-manno-heptose (ADP-Heptose) by ALPK1. Phosphorylation at Thr-9 by ALPK1 leads to the formation of an intermolecular binding between the FHA domain and phosphorylated Thr-9, promoting TIFA oligomerization and TIFA-mediated NF-kappa-B activation.

Its subcellular location is the cytoplasm. In terms of biological role, adapter molecule that plays a key role in the activation of pro-inflammatory NF-kappa-B signaling following detection of bacterial pathogen-associated molecular pattern metabolites (PAMPs). Promotes activation of an innate immune response by inducing the oligomerization and polyubiquitination of TRAF6, which leads to the activation of TAK1 and IKK through a proteasome-independent mechanism. TIFA-dependent innate immune response is triggered by ADP-D-glycero-beta-D-manno-heptose (ADP-Heptose), a potent PAMP present in all Gram-negative and some Gram-positive bacteria: ADP-Heptose is recognized by ALPK1, which phosphorylates TIFA at Thr-9, leading to TIFA homooligomerization and subsequent activation of pro-inflammatory NF-kappa-B signaling. The sequence is that of TRAF-interacting protein with FHA domain-containing protein A from Homo sapiens (Human).